A 543-amino-acid chain; its full sequence is Reticulophagy regulator 2 (543 aa).

3 helical membrane passes run alanine 12–methionine 32, serine 100–tryptophan 120, and valine 204–valine 224. The span at leucine 254–glycine 265 shows a compositional bias: basic residues. A disordered region spans residues leucine 254–leucine 287. Over residues proline 275–alanine 285 the composition is skewed to acidic residues. The residue at position 279 (threonine 279) is a Phosphothreonine. Residues serine 281, serine 283, serine 291, and serine 311 each carry the phosphoserine modification. Threonine 334 is subject to Phosphothreonine. Disordered regions lie at residues valine 336–alanine 394 and histidine 411–alanine 486. Phosphoserine occurs at positions 337, 344, 347, and 385. A compositionally biased stretch (pro residues) spans alanine 461–alanine 480. An LIR motif motif is present at residues glutamate 490–leucine 495. The disordered stretch occupies residues asparagine 504–proline 543. A compositionally biased stretch (pro residues) spans glutamate 512–glycine 524.

This sequence belongs to the RETREG family. As to quaternary structure, interacts with ATG8 family modifier proteins MAP1LC3A, MAP1LC3B, MAP1LC3C, GABARAP, GABARAPL1 and GABARAPL2. Shows higher affinity for GABARAPL1 than for MAP1LC3B. Interacts with CANX.

It is found in the endoplasmic reticulum membrane. Endoplasmic reticulum (ER)-anchored autophagy regulator which exists in an inactive state under basal conditions but is activated following cellular stress. When activated, induces ER fragmentation and mediates ER delivery into lysosomes through sequestration into autophagosomes via interaction with ATG8 family proteins. Required for collagen quality control in a LIR motif-independent manner. In Homo sapiens (Human), this protein is Reticulophagy regulator 2.